Reading from the N-terminus, the 994-residue chain is cGMP-dependent protein kinase (994 aa).

The interval 1–162 (MGACISKNSS…QDDSHTEEEK (162 aa)) is disordered. Glycine 2 carries the N-myristoyl glycine lipid modification. The S-palmitoyl cysteine moiety is linked to residue cysteine 4. 2 stretches are compositionally biased toward low complexity: residues 9-22 (SSARVSRSSALSAS) and 33-46 (GAAGDETSATGAAE). Basic and acidic residues-rich tracts occupy residues 65–80 (ELERAPDGVCPDREEP) and 133–162 (EGPKEKPGGDRKPAQKAILKQDDSHTEEEK). CNMP-binding domain regions lie at residues 189-305 (VCSS…FLAS), 308-407 (FFEM…RVLG), 463-539 (GIRF…ATLG), and 561-660 (IFRY…NEII). Residues glycine 253, glutamate 254, alanine 256, arginine 263, and serine 264 each contribute to the 3',5'-cyclic GMP site. 3',5'-cyclic GMP-binding residues include arginine 616, glycine 625, glutamate 626, alanine 628, arginine 635, and threonine 636. Residues 684–941 (LQVVRVVGRG…YKDIKEHAFF (258 aa)) enclose the Protein kinase domain. ATP is bound by residues 690-698 (VGRGTFGTV) and lysine 713. Residue aspartate 807 is the Proton acceptor of the active site. An AGC-kinase C-terminal domain is found at 942–994 (GDFDWDKLAGRGLPPPLAPKGETYAEDTEQSSFELDEDDTIVLEDEYDWDKDF). The segment at 954 to 976 (LPPPLAPKGETYAEDTEQSSFEL) is disordered. A compositionally biased stretch (acidic residues) spans 965-976 (YAEDTEQSSFEL).

The protein belongs to the protein kinase superfamily. AGC Ser/Thr protein kinase family. cGMP subfamily. Mg(2+) is required as a cofactor.

It localises to the cytoplasm. The protein resides in the membrane. Its subcellular location is the cell membrane. The catalysed reaction is L-seryl-[protein] + ATP = O-phospho-L-seryl-[protein] + ADP + H(+). It carries out the reaction L-threonyl-[protein] + ATP = O-phospho-L-threonyl-[protein] + ADP + H(+). Activated by cGMP. The cGMP-binding domains acts cooperatively to activate PKG. Inhibited by the antiparasitic small molecule 4-[2-(4-fluorophenyl)-5-(1-methylpiperidine-4-yl)-1Hpyrrol- 3-yl]pyridine (compound 1). In terms of biological role, serine/threonine protein kinase which acts as a downstream effector of the second messenger cGMP. Plays an essential role in tachyzoite invasion of and egress from host cells. During invasion of host cells, regulates the apico-basal flux of F-actin probably via Ca(2+)-mediated activation of CDPK1. In tachyzoites, required for microneme secretion. Required for tachyzoite gliding motility. Plays an essential role in parasite invasion of and egress from host cells, and microneme secretion. Its function is as follows. Dispensable for parasite invasion of and egress from host cells, and microneme secretion. The sequence is that of cGMP-dependent protein kinase from Toxoplasma gondii.